A 555-amino-acid chain; its full sequence is Glutamine--tRNA ligase (555 aa).

Positions 34–44 (PEPNGYLHIGH) match the 'HIGH' region motif. Residues 35 to 37 (EPN) and 41 to 47 (HIGHAKS) each bind ATP. L-glutamine contacts are provided by Asp67 and Tyr212. Residues Thr231, 261-262 (RL), and 269-271 (MSK) each bind ATP. The short motif at 268 to 272 (VMSKR) is the 'KMSKS' region element. The interaction with tRNA stretch occupies residues 317–324 (TKQDNTIE).

The protein belongs to the class-I aminoacyl-tRNA synthetase family. In terms of assembly, monomer.

The protein resides in the cytoplasm. It catalyses the reaction tRNA(Gln) + L-glutamine + ATP = L-glutaminyl-tRNA(Gln) + AMP + diphosphate. This chain is Glutamine--tRNA ligase, found in Salmonella schwarzengrund (strain CVM19633).